A 366-amino-acid chain; its full sequence is Pyruvate dehydrogenase E1 component subunit beta, mitochondrial (366 aa).

Residues 1–33 (MFSRLPTSLARNVARRAPTSFVRPSAAAAALRF) constitute a mitochondrion transit peptide. Glutamate 95 contacts thiamine diphosphate. 4 residues coordinate K(+): alanine 196, isoleucine 197, aspartate 199, and asparagine 201.

In terms of assembly, pyruvate dehydrogenase (E1) is a tetramer of 2 alpha and 2 beta subunits. Eukaryotic pyruvate dehydrogenase (PDH) complexes are organized as a core consisting of the oligomeric dihydrolipoamide acetyl-transferase (E2), around which are arranged multiple copies of pyruvate dehydrogenase (E1), dihydrolipoamide dehydrogenase (E3) and protein X (E3BP) bound by non-covalent bonds. Thiamine diphosphate serves as cofactor.

It localises to the mitochondrion matrix. The enzyme catalyses N(6)-[(R)-lipoyl]-L-lysyl-[protein] + pyruvate + H(+) = N(6)-[(R)-S(8)-acetyldihydrolipoyl]-L-lysyl-[protein] + CO2. The pyruvate dehydrogenase complex catalyzes the overall conversion of pyruvate to acetyl-CoA and CO(2). The chain is Pyruvate dehydrogenase E1 component subunit beta, mitochondrial (PDB1) from Saccharomyces cerevisiae (strain ATCC 204508 / S288c) (Baker's yeast).